A 710-amino-acid polypeptide reads, in one-letter code: Early transcription factor 82 kDa subunit (710 aa).

The protein belongs to the poxviridae VETF large subunit family. In terms of assembly, heterodimer of a 70 kDa and a 82 kDa subunit. Part of the early transcription complex composed of ETF, RAP94/OPG109, and the DNA-directed RNA polymerase.

It is found in the virion. Its function is as follows. Acts with RNA polymerase to initiate transcription from early gene promoters. Is recruited by the RPO-associated protein of 94 kDa RAP94/OPG109 to form the early transcription complex, which also contains the core RNA polymerase. ETF heterodimer binds to early gene promoters. This Monkeypox virus protein is Early transcription factor 82 kDa subunit (OPG133).